Consider the following 363-residue polypeptide: NADH-quinone oxidoreductase subunit H (363 aa).

Helical transmembrane passes span 29–49, 62–82, 96–116, 127–147, 163–183, 202–222, 238–257, 264–286, 299–319, and 339–359; these read VLKI…YVVW, GPMY…KLLF, FVIA…VVPF, VGLL…ILAG, AAQV…VMIA, FFDW…VSGV, EIVA…LFFL, ILVS…QGWV, KGGW…YIWF, and FIPL…YGVI.

It belongs to the complex I subunit 1 family. As to quaternary structure, NDH-1 is composed of 14 different subunits. Subunits NuoA, H, J, K, L, M, N constitute the membrane sector of the complex.

It is found in the cell inner membrane. The enzyme catalyses a quinone + NADH + 5 H(+)(in) = a quinol + NAD(+) + 4 H(+)(out). In terms of biological role, NDH-1 shuttles electrons from NADH, via FMN and iron-sulfur (Fe-S) centers, to quinones in the respiratory chain. The immediate electron acceptor for the enzyme in this species is believed to be ubiquinone. Couples the redox reaction to proton translocation (for every two electrons transferred, four hydrogen ions are translocated across the cytoplasmic membrane), and thus conserves the redox energy in a proton gradient. This subunit may bind ubiquinone. The polypeptide is NADH-quinone oxidoreductase subunit H (Xanthomonas euvesicatoria pv. vesicatoria (strain 85-10) (Xanthomonas campestris pv. vesicatoria)).